Reading from the N-terminus, the 172-residue chain is uncharacterized protein (172 aa).

The span at Met-1 to Glu-17 shows a compositional bias: basic and acidic residues. Residues Met-1 to Pro-27 are disordered. A helical membrane pass occupies residues Ile-129–Phe-151.

Its subcellular location is the membrane. This is an uncharacterized protein from Bacillus subtilis (strain 168).